Here is a 96-residue protein sequence, read N- to C-terminus: Large ribosomal subunit protein eL21 (96 aa).

A disordered region spans residues 1–22 (MRKSKGFKSRSRYKLKRSIRPK).

Belongs to the eukaryotic ribosomal protein eL21 family.

This Methanosphaera stadtmanae (strain ATCC 43021 / DSM 3091 / JCM 11832 / MCB-3) protein is Large ribosomal subunit protein eL21.